Consider the following 180-residue polypeptide: MKNKLKKKKNPKGTKKIKAKAKAHKVGTTKVKVKKKIYTIGTLHDLPSQIESYSDKESYSDKESYSDKESYSDKESYSDKESYSDKNILVKIFYEPEIRYLTPLEIETKPENKYCFFKKNNIKYIDFKNPSFLMKFLNERGEILPRRITGTSKKFQKKLKRAIKKCKHIGLLPYLTDGLR.

Disordered regions lie at residues 1–26 (MKNKLKKKKNPKGTKKIKAKAKAHKV) and 53–82 (YSDKESYSDKESYSDKESYSDKESYSDKES).

This sequence belongs to the bacterial ribosomal protein bS18 family. As to quaternary structure, part of the 30S ribosomal subunit. Forms a tight heterodimer with protein bS6.

Its function is as follows. Binds as a heterodimer with protein bS6 to the central domain of the 16S rRNA, where it helps stabilize the platform of the 30S subunit. The chain is Small ribosomal subunit protein bS18 from Karelsulcia muelleri (strain GWSS) (Sulcia muelleri).